Consider the following 429-residue polypeptide: Adenylosuccinate synthetase (429 aa).

GTP contacts are provided by residues Gly12–Lys18 and Gly40–Thr42. Catalysis depends on Asp13, which acts as the Proton acceptor. Mg(2+) is bound by residues Asp13 and Gly40. Residues Asp13 to Lys16, Asn38 to His41, Thr128, Arg142, Gln223, Thr238, and Arg302 contribute to the IMP site. Residue His41 is the Proton donor of the active site. Thr298–Arg304 provides a ligand contact to substrate. GTP-binding positions include Arg304, Ser330–Asp332, and Ser412–Gly414.

Belongs to the adenylosuccinate synthetase family. As to quaternary structure, homodimer. Mg(2+) is required as a cofactor.

It is found in the cytoplasm. It catalyses the reaction IMP + L-aspartate + GTP = N(6)-(1,2-dicarboxyethyl)-AMP + GDP + phosphate + 2 H(+). Its pathway is purine metabolism; AMP biosynthesis via de novo pathway; AMP from IMP: step 1/2. Its function is as follows. Plays an important role in the de novo pathway of purine nucleotide biosynthesis. Catalyzes the first committed step in the biosynthesis of AMP from IMP. This is Adenylosuccinate synthetase from Exiguobacterium sp. (strain ATCC BAA-1283 / AT1b).